We begin with the raw amino-acid sequence, 804 residues long: E3 ubiquitin-protein ligase RNF10 (804 aa).

Low complexity-rich tracts occupy residues 1 to 31 (MPQSSPSAAATASDMDKNSGSNSSSASSGSS), 78 to 90 (SNQSRRSNSQKSK), and 104 to 113 (SKPFSSSSNG). The segment at 1–134 (MPQSSPSAAA…AEFSPAQFSG (134 aa)) is disordered. S5 bears the Phosphoserine mark. Phosphoserine is present on S110. The span at 114 to 124 (GRRDEVAEAQR) shows a compositional bias: basic and acidic residues. S128 bears the Phosphoserine mark. Residues 225-267 (CPICLYPPTAAKITRCGHIFCWACILHYLSLSEKTWSKCPICY) form an RING-type zinc finger. 3 disordered regions span residues 589-611 (DIEKRKRQRQKKAREERRRERRI), 646-665 (DSALGPTSTEGHGALSLSPL), and 715-804 (KADG…VHTK). Over residues 601-611 (AREERRRERRI) the composition is skewed to basic and acidic residues. Residues 646–655 (DSALGPTSTE) show a composition bias toward polar residues. Positions 715–729 (KADGWPKTAPKKDDN) are enriched in basic and acidic residues. Positions 795–804 (LFSTSVVHTK) are enriched in polar residues.

The protein belongs to the RNF10 family. In terms of assembly, interacts with MEOX2.

Its subcellular location is the cytoplasm. It is found in the nucleus. The catalysed reaction is S-ubiquitinyl-[E2 ubiquitin-conjugating enzyme]-L-cysteine + [acceptor protein]-L-lysine = [E2 ubiquitin-conjugating enzyme]-L-cysteine + N(6)-ubiquitinyl-[acceptor protein]-L-lysine.. The protein operates within protein modification; protein ubiquitination. E3 ubiquitin-protein ligase that catalyzes monoubiquitination of 40S ribosomal proteins RPS2/us5 and RPS3/us3 in response to ribosome stalling. Part of a ribosome quality control that takes place when ribosomes have stalled during translation initiation (iRQC): RNF10 acts by mediating monoubiquitination of RPS2/us5 and RPS3/us3, promoting their degradation by the proteasome. Also promotes ubiquitination of 40S ribosomal proteins in response to ribosome stalling during translation elongation. The action of RNF10 in iRQC is counteracted by USP10. May also act as a transcriptional factor involved in the regulation of MAG (Myelin-associated glycoprotein) expression. Acts as a regulator of Schwann cell differentiation and myelination. This chain is E3 ubiquitin-protein ligase RNF10, found in Mus musculus (Mouse).